The chain runs to 451 residues: NADH-quinone oxidoreductase subunit D (451 aa).

This sequence belongs to the complex I 49 kDa subunit family. NDH-1 is composed of 14 different subunits. Subunits NuoB, C, D, E, F, and G constitute the peripheral sector of the complex.

Its subcellular location is the cell membrane. The catalysed reaction is a quinone + NADH + 5 H(+)(in) = a quinol + NAD(+) + 4 H(+)(out). In terms of biological role, NDH-1 shuttles electrons from NADH, via FMN and iron-sulfur (Fe-S) centers, to quinones in the respiratory chain. The immediate electron acceptor for the enzyme in this species is believed to be a menaquinone. Couples the redox reaction to proton translocation (for every two electrons transferred, four hydrogen ions are translocated across the cytoplasmic membrane), and thus conserves the redox energy in a proton gradient. In Mycolicibacterium gilvum (strain PYR-GCK) (Mycobacterium gilvum (strain PYR-GCK)), this protein is NADH-quinone oxidoreductase subunit D.